Here is a 488-residue protein sequence, read N- to C-terminus: Bifunctional protein GlmU (488 aa).

The interval 1 to 237 is pyrophosphorylase; the sequence is MPRTRTPLAA…AEEASGVNDR (237 aa). UDP-N-acetyl-alpha-D-glucosamine-binding positions include 13–16, Lys27, Gln82, 87–88, 110–112, Gly149, Glu164, Asn179, and Asn235; these read LAAG, GT, and SGD. Asp112 serves as a coordination point for Mg(2+). Asn235 contacts Mg(2+). Residues 238–258 are linker; the sequence is VELSRANRVMVGRLAEAFMRA. Residues 259–488 are N-acetyltransferase; sequence GVTIEDPARF…KGRPAARRAS (230 aa). UDP-N-acetyl-alpha-D-glucosamine contacts are provided by Arg341 and Lys359. The active-site Proton acceptor is the His371. Residues Tyr374 and Asn385 each contribute to the UDP-N-acetyl-alpha-D-glucosamine site. Acetyl-CoA is bound by residues Ala388, 394-395, Ser413, Ala431, and Arg448; that span reads NY. The interval 459 to 488 is disordered; that stretch reads AQRQAEKQMKGTATGPASARKGRPAARRAS. Basic residues predominate over residues 478 to 488; that stretch reads RKGRPAARRAS.

This sequence in the N-terminal section; belongs to the N-acetylglucosamine-1-phosphate uridyltransferase family. It in the C-terminal section; belongs to the transferase hexapeptide repeat family. As to quaternary structure, homotrimer. Mg(2+) serves as cofactor.

The protein resides in the cytoplasm. The catalysed reaction is alpha-D-glucosamine 1-phosphate + acetyl-CoA = N-acetyl-alpha-D-glucosamine 1-phosphate + CoA + H(+). It catalyses the reaction N-acetyl-alpha-D-glucosamine 1-phosphate + UTP + H(+) = UDP-N-acetyl-alpha-D-glucosamine + diphosphate. The protein operates within nucleotide-sugar biosynthesis; UDP-N-acetyl-alpha-D-glucosamine biosynthesis; N-acetyl-alpha-D-glucosamine 1-phosphate from alpha-D-glucosamine 6-phosphate (route II): step 2/2. It functions in the pathway nucleotide-sugar biosynthesis; UDP-N-acetyl-alpha-D-glucosamine biosynthesis; UDP-N-acetyl-alpha-D-glucosamine from N-acetyl-alpha-D-glucosamine 1-phosphate: step 1/1. Its pathway is bacterial outer membrane biogenesis; LPS lipid A biosynthesis. Its function is as follows. Catalyzes the last two sequential reactions in the de novo biosynthetic pathway for UDP-N-acetylglucosamine (UDP-GlcNAc). The C-terminal domain catalyzes the transfer of acetyl group from acetyl coenzyme A to glucosamine-1-phosphate (GlcN-1-P) to produce N-acetylglucosamine-1-phosphate (GlcNAc-1-P), which is converted into UDP-GlcNAc by the transfer of uridine 5-monophosphate (from uridine 5-triphosphate), a reaction catalyzed by the N-terminal domain. This chain is Bifunctional protein GlmU, found in Anaeromyxobacter dehalogenans (strain 2CP-1 / ATCC BAA-258).